The following is a 122-amino-acid chain: Large ribosomal subunit protein bL17 (122 aa).

It belongs to the bacterial ribosomal protein bL17 family. Part of the 50S ribosomal subunit. Contacts protein L32.

This is Large ribosomal subunit protein bL17 from Wigglesworthia glossinidia brevipalpis.